A 150-amino-acid chain; its full sequence is uncharacterized protein (150 aa).

The protein belongs to the Dps family.

This is an uncharacterized protein from Kitasatospora aureofaciens (Streptomyces aureofaciens).